A 367-amino-acid chain; its full sequence is Peptide chain release factor 2 (367 aa).

At Q254 the chain carries N5-methylglutamine.

This sequence belongs to the prokaryotic/mitochondrial release factor family. Methylated by PrmC. Methylation increases the termination efficiency of RF2.

Its subcellular location is the cytoplasm. Peptide chain release factor 2 directs the termination of translation in response to the peptide chain termination codons UGA and UAA. This is Peptide chain release factor 2 from Neisseria meningitidis serogroup B (strain ATCC BAA-335 / MC58).